Here is a 121-residue protein sequence, read N- to C-terminus: Large ribosomal subunit protein bL20 (121 aa).

The protein belongs to the bacterial ribosomal protein bL20 family.

Binds directly to 23S ribosomal RNA and is necessary for the in vitro assembly process of the 50S ribosomal subunit. It is not involved in the protein synthesizing functions of that subunit. This Roseobacter denitrificans (strain ATCC 33942 / OCh 114) (Erythrobacter sp. (strain OCh 114)) protein is Large ribosomal subunit protein bL20.